The chain runs to 232 residues: tRNA (guanine-N(7)-)-methyltransferase (232 aa).

S-adenosyl-L-methionine contacts are provided by E63, E88, D115, and D137. The active site involves D137. Substrate contacts are provided by residues K141, D173, and 211 to 214 (TRYE).

Belongs to the class I-like SAM-binding methyltransferase superfamily. TrmB family.

It catalyses the reaction guanosine(46) in tRNA + S-adenosyl-L-methionine = N(7)-methylguanosine(46) in tRNA + S-adenosyl-L-homocysteine. Its pathway is tRNA modification; N(7)-methylguanine-tRNA biosynthesis. Catalyzes the formation of N(7)-methylguanine at position 46 (m7G46) in tRNA. In Chelativorans sp. (strain BNC1), this protein is tRNA (guanine-N(7)-)-methyltransferase.